A 213-amino-acid chain; its full sequence is Calcium-dependent cell adhesion molecule 1 (213 aa).

4 consecutive repeat copies span residues Met1–Ser48, Asn49–Gln97, Trp98–Pro146, and Asp147–Asn194. Residues Met1 to Asn194 are 4 X approximate tandem repeats.

It belongs to the Dictyostelium CAD family. The N-terminus is blocked.

It localises to the cell membrane. Functionally, mediates calcium-dependent cell-cell adhesion during the early stage of development. This Dictyostelium discoideum (Social amoeba) protein is Calcium-dependent cell adhesion molecule 1 (cadA).